Here is a 406-residue protein sequence, read N- to C-terminus: MANVLDTLMERGYIKQFTHEAETRELLEKEKVTFYIGFDPTADSLHVGHFIAMMFMAHMQKAGHRPIALIGGGTATIGDPSGKTDMRKMMTNETIAHNVACIKKQMEKFIDFSDDKAILVNNADWLLNQNYVEFLREVGVHFSVNRMLSAECFKQRLERGLSFLEFNYMLMQGYDFYVLNKKYNCKMELGGDDQWSNMIAGVELVRKKSQESAYAMTCTLLTNSEGQKMGKTVNGALWLDPEKTSPYEFYQYWRNVNDADVEKCLKLLTFIPMDEVRRLSSLEGSQINEAKKVLAFEVTKLVHGEEEATKAQQAAEALFGKGGDMSNVPTYEMGKDKLGAELLDILVEAEIVPSKAEGKRLVKQGGLSLNGEKVADFKKTLEEADFENGEVLIKRGKKNYNKIVLA.

Tyr35 contributes to the L-tyrosine binding site. The 'HIGH' region signature appears at 40–49; the sequence is PTADSLHVGH. L-tyrosine is bound by residues Tyr168 and Gln172. The short motif at 228-232 is the 'KMSKS' region element; it reads KMGKT. Lys231 contacts ATP. Positions 340-404 constitute an S4 RNA-binding domain; the sequence is AELLDILVEA…RGKKNYNKIV (65 aa).

It belongs to the class-I aminoacyl-tRNA synthetase family. TyrS type 1 subfamily. In terms of assembly, homodimer.

It is found in the cytoplasm. The catalysed reaction is tRNA(Tyr) + L-tyrosine + ATP = L-tyrosyl-tRNA(Tyr) + AMP + diphosphate + H(+). Its function is as follows. Catalyzes the attachment of tyrosine to tRNA(Tyr) in a two-step reaction: tyrosine is first activated by ATP to form Tyr-AMP and then transferred to the acceptor end of tRNA(Tyr). This chain is Tyrosine--tRNA ligase, found in Clostridium perfringens (strain 13 / Type A).